The primary structure comprises 204 residues: FMN-dependent NADH:quinone oxidoreductase (204 aa).

FMN-binding positions include serine 9, 15 to 17, and 97 to 100; these read SVS and MYNF.

Belongs to the azoreductase type 1 family. In terms of assembly, homodimer. Requires FMN as cofactor.

The catalysed reaction is 2 a quinone + NADH + H(+) = 2 a 1,4-benzosemiquinone + NAD(+). It carries out the reaction N,N-dimethyl-1,4-phenylenediamine + anthranilate + 2 NAD(+) = 2-(4-dimethylaminophenyl)diazenylbenzoate + 2 NADH + 2 H(+). Its function is as follows. Quinone reductase that provides resistance to thiol-specific stress caused by electrophilic quinones. Also exhibits azoreductase activity. Catalyzes the reductive cleavage of the azo bond in aromatic azo compounds to the corresponding amines. In Methylobacterium radiotolerans (strain ATCC 27329 / DSM 1819 / JCM 2831 / NBRC 15690 / NCIMB 10815 / 0-1), this protein is FMN-dependent NADH:quinone oxidoreductase.